The following is a 360-amino-acid chain: Peptide chain release factor 1 (360 aa).

Gln-237 is modified (N5-methylglutamine).

It belongs to the prokaryotic/mitochondrial release factor family. In terms of processing, methylated by PrmC. Methylation increases the termination efficiency of RF1.

The protein resides in the cytoplasm. Functionally, peptide chain release factor 1 directs the termination of translation in response to the peptide chain termination codons UAG and UAA. The sequence is that of Peptide chain release factor 1 from Azotobacter vinelandii (strain DJ / ATCC BAA-1303).